We begin with the raw amino-acid sequence, 342 residues long: tRNA N6-adenosine threonylcarbamoyltransferase (342 aa).

Fe cation contacts are provided by His-114 and His-118. Residues 136–140 (LVSGG), Asp-169, Gly-182, Asp-186, and Asn-275 each bind substrate. Asp-301 provides a ligand contact to Fe cation.

This sequence belongs to the KAE1 / TsaD family. Fe(2+) serves as cofactor.

It localises to the cytoplasm. The enzyme catalyses L-threonylcarbamoyladenylate + adenosine(37) in tRNA = N(6)-L-threonylcarbamoyladenosine(37) in tRNA + AMP + H(+). Functionally, required for the formation of a threonylcarbamoyl group on adenosine at position 37 (t(6)A37) in tRNAs that read codons beginning with adenine. Is involved in the transfer of the threonylcarbamoyl moiety of threonylcarbamoyl-AMP (TC-AMP) to the N6 group of A37, together with TsaE and TsaB. TsaD likely plays a direct catalytic role in this reaction. The sequence is that of tRNA N6-adenosine threonylcarbamoyltransferase from Streptococcus pyogenes serotype M3 (strain ATCC BAA-595 / MGAS315).